The sequence spans 68 residues: Metallothionein-3 (68 aa).

Met-1 carries the post-translational modification N-acetylmethionine. The beta stretch occupies residues 1–30 (MDPETCPCPSGGSCTCADSCKCEGCKCTSC). Residues Cys-6, Cys-8, Cys-14, Cys-16, Cys-20, Cys-22, Cys-25, Cys-27, and Cys-30 each contribute to the a divalent metal cation site. Positions 31–68 (KKSCCSCCPAECEKCAKDCVCKGGEAAEAEAEKCSCCQ) are alpha. Phosphoserine is present on Ser-33. Cys-34, Cys-35, Cys-37, Cys-38, Cys-42, Cys-45, Cys-49, Cys-51, Cys-64, Cys-66, and Cys-67 together coordinate a divalent metal cation.

It belongs to the metallothionein superfamily. Type 1 family. In terms of tissue distribution, abundant in a subset of astrocytes in the normal human brain, but greatly reduced in the Alzheimer disease (AD) brain.

Binds heavy metals. Contains three zinc and three copper atoms per polypeptide chain and only a negligible amount of cadmium. Inhibits survival and neurite formation of cortical neurons in vitro. The protein is Metallothionein-3 (MT3) of Homo sapiens (Human).